A 95-amino-acid chain; its full sequence is Small ribosomal subunit protein bS6 (95 aa).

It belongs to the bacterial ribosomal protein bS6 family.

Its function is as follows. Binds together with bS18 to 16S ribosomal RNA. In Geobacillus kaustophilus (strain HTA426), this protein is Small ribosomal subunit protein bS6.